The primary structure comprises 873 residues: Zinc fingers and homeoboxes protein 1 (873 aa).

T36 is subject to Phosphothreonine. The segment at 41–63 is disordered; sequence AKAESVSSDEEVHGSVDSDNQQN. Residues S45, S47, and S48 each carry the phosphoserine modification. The span at 50–63 shows a compositional bias: basic and acidic residues; that stretch reads EEVHGSVDSDNQQN. 2 C2H2-type zinc fingers span residues 70-93 and 102-125; these read YECK…DSEH and YVCV…LKYH. Residue K159 forms a Glycyl lysine isopeptide (Lys-Gly) (interchain with G-Cter in SUMO2) linkage. The interval 198–247 is disordered; sequence VHHNSAEGTSEEKENGVKASQEENAESVSSSALESNTSTSTINRVHPSPA. A Phosphoserine modification is found at S202. Low complexity predominate over residues 223-238; the sequence is ESVSSSALESNTSTST. The tract at residues 272–432 is required for dimerization; that stretch reads NSNLLPKVLI…QTNVQKSQVP (161 aa). Residues 272–564 are required for interaction with NFYA; the sequence is NSNLLPKVLI…SQQKQSWNPF (293 aa). Residues 284-346 constitute a DNA-binding region (homeobox 1); the sequence is NSIPTYNAAL…LKHGVSWTPE (63 aa). Positions 429–456 are disordered; it reads SQVPAAQPATDTKPATAAVPSSPSVRPE. Glycyl lysine isopeptide (Lys-Gly) (interchain with G-Cter in SUMO2) cross-links involve residues K441 and K485. A DNA-binding region (homeobox 2) is located at residues 464–526; that stretch reads SFGIRAKKTK…YNQRNSKSNQ (63 aa). Disordered regions lie at residues 541–568, 627–668, and 731–767; these read DSSD…PDFA, DEKI…CKKT, and SSSL…KRMN. The homeobox 3 DNA-binding region spans 569-630; the sequence is PQKFKEKTAE…KTKALKDEKI (62 aa). Residue K629 forms a Glycyl lysine isopeptide (Lys-Gly) (interchain with G-Cter in SUMO2) linkage. The residue at position 648 (S648) is a Phosphoserine. A DNA-binding region (homeobox 4) is located at residues 660–722; that stretch reads GTGKICKKTP…YAWKNGNLKW (63 aa). The required for nuclear localization stretch occupies residues 734 to 768; sequence LNGLSSLRRRGRGRPKGRGRGRPRGRPRGGKRMNT. Positions 740 to 764 are enriched in basic residues; that stretch reads LRRRGRGRPKGRGRGRPRGRPRGGK. At S774 the chain carries Phosphoserine. The segment at residues 777–832 is a DNA-binding region (homeobox 5); it reads KFKTGTAILKDYYLKHKFLNEQDLDELVNRSHMGYEQVREWFAERQRRSELGIELF. The interval 829-873 is disordered; sequence IELFEENEEEDEVVDDQEEDEEETDDSDTWEPPRHVKRKLSKSDD. Positions 831-857 are enriched in acidic residues; that stretch reads LFEENEEEDEVVDDQEEDEEETDDSDT. Residues 831-873 are required for repressor activity; sequence LFEENEEEDEVVDDQEEDEEETDDSDTWEPPRHVKRKLSKSDD. Basic residues predominate over residues 863-873; that stretch reads HVKRKLSKSDD.

Belongs to the ZHX family. In terms of assembly, forms homodimers. Heterodimer (via HD1 domain) with ZHX2 (via HD1 domain). Also forms a heterodimer with ZHX3 which is a prerequisite for repressor activity. Interacts with ATF7IP and NFYA. Interacts (via homeobox domains) with DNMT3B (via PWWP domain). As to expression, widely expressed with highest levels in brain.

The protein localises to the nucleus. Its function is as follows. Acts as a transcriptional repressor. Increases DNMT3B-mediated repressive transcriptional activity when DNMT3B is tethered to DNA. May link molecule between DNMT3B and other co-repressor proteins. This is Zinc fingers and homeoboxes protein 1 (Zhx1) from Mus musculus (Mouse).